Consider the following 120-residue polypeptide: Large ribosomal subunit protein uL18 (120 aa).

This sequence belongs to the universal ribosomal protein uL18 family. Part of the 50S ribosomal subunit; part of the 5S rRNA/L5/L18/L25 subcomplex. Contacts the 5S and 23S rRNAs.

Functionally, this is one of the proteins that bind and probably mediate the attachment of the 5S RNA into the large ribosomal subunit, where it forms part of the central protuberance. This chain is Large ribosomal subunit protein uL18, found in Afipia carboxidovorans (strain ATCC 49405 / DSM 1227 / KCTC 32145 / OM5) (Oligotropha carboxidovorans).